The following is a 186-amino-acid chain: Elongation factor P (186 aa).

Belongs to the elongation factor P family.

Its subcellular location is the cytoplasm. It functions in the pathway protein biosynthesis; polypeptide chain elongation. Its function is as follows. Involved in peptide bond synthesis. Stimulates efficient translation and peptide-bond synthesis on native or reconstituted 70S ribosomes in vitro. Probably functions indirectly by altering the affinity of the ribosome for aminoacyl-tRNA, thus increasing their reactivity as acceptors for peptidyl transferase. The chain is Elongation factor P from Streptococcus mutans serotype c (strain ATCC 700610 / UA159).